Reading from the N-terminus, the 376-residue chain is N-acetyldiaminopimelate deacetylase (376 aa).

The active site involves aspartate 69. The active-site Proton acceptor is glutamate 128.

Belongs to the peptidase M20A family. N-acetyldiaminopimelate deacetylase subfamily.

It carries out the reaction N-acetyl-(2S,6S)-2,6-diaminopimelate + H2O = (2S,6S)-2,6-diaminopimelate + acetate. It functions in the pathway amino-acid biosynthesis; L-lysine biosynthesis via DAP pathway; LL-2,6-diaminopimelate from (S)-tetrahydrodipicolinate (acetylase route): step 3/3. Its function is as follows. Catalyzes the conversion of N-acetyl-diaminopimelate to diaminopimelate and acetate. The sequence is that of N-acetyldiaminopimelate deacetylase from Bacillus anthracis (strain A0248).